Here is a 224-residue protein sequence, read N- to C-terminus: Holliday junction branch migration complex subunit RuvA (224 aa).

The tract at residues 1 to 67 (MISWLKGEKV…EDGTSLYGFI (67 aa)) is domain I. Positions 68 to 146 (EVNQRDLFRE…RFTDNDKTIH (79 aa)) are domain II. The tract at residues 147-155 (ENKKGIEAN) is flexible linker. The tract at residues 156–224 (QFSKYIDEIY…ILMKLSEKTT (69 aa)) is domain III.

It belongs to the RuvA family. As to quaternary structure, homotetramer. Forms an RuvA(8)-RuvB(12)-Holliday junction (HJ) complex. HJ DNA is sandwiched between 2 RuvA tetramers; dsDNA enters through RuvA and exits via RuvB. An RuvB hexamer assembles on each DNA strand where it exits the tetramer. Each RuvB hexamer is contacted by two RuvA subunits (via domain III) on 2 adjacent RuvB subunits; this complex drives branch migration. In the full resolvosome a probable DNA-RuvA(4)-RuvB(12)-RuvC(2) complex forms which resolves the HJ.

Its subcellular location is the cytoplasm. Its function is as follows. The RuvA-RuvB-RuvC complex processes Holliday junction (HJ) DNA during genetic recombination and DNA repair, while the RuvA-RuvB complex plays an important role in the rescue of blocked DNA replication forks via replication fork reversal (RFR). RuvA specifically binds to HJ cruciform DNA, conferring on it an open structure. The RuvB hexamer acts as an ATP-dependent pump, pulling dsDNA into and through the RuvAB complex. HJ branch migration allows RuvC to scan DNA until it finds its consensus sequence, where it cleaves and resolves the cruciform DNA. The chain is Holliday junction branch migration complex subunit RuvA from Prochlorococcus marinus (strain NATL1A).